A 213-amino-acid chain; its full sequence is Imidazole glycerol phosphate synthase subunit HisH (213 aa).

The Glutamine amidotransferase type-1 domain maps to 1–212 (MLAILDYKAG…HRYCTEAADA (212 aa)). The active-site Nucleophile is cysteine 79. Residues histidine 187 and glutamate 189 contribute to the active site.

As to quaternary structure, heterodimer of HisH and HisF.

The protein localises to the cytoplasm. The enzyme catalyses 5-[(5-phospho-1-deoxy-D-ribulos-1-ylimino)methylamino]-1-(5-phospho-beta-D-ribosyl)imidazole-4-carboxamide + L-glutamine = D-erythro-1-(imidazol-4-yl)glycerol 3-phosphate + 5-amino-1-(5-phospho-beta-D-ribosyl)imidazole-4-carboxamide + L-glutamate + H(+). The catalysed reaction is L-glutamine + H2O = L-glutamate + NH4(+). It functions in the pathway amino-acid biosynthesis; L-histidine biosynthesis; L-histidine from 5-phospho-alpha-D-ribose 1-diphosphate: step 5/9. Its function is as follows. IGPS catalyzes the conversion of PRFAR and glutamine to IGP, AICAR and glutamate. The HisH subunit catalyzes the hydrolysis of glutamine to glutamate and ammonia as part of the synthesis of IGP and AICAR. The resulting ammonia molecule is channeled to the active site of HisF. The chain is Imidazole glycerol phosphate synthase subunit HisH from Nitratidesulfovibrio vulgaris (strain ATCC 29579 / DSM 644 / CCUG 34227 / NCIMB 8303 / VKM B-1760 / Hildenborough) (Desulfovibrio vulgaris).